The following is a 206-amino-acid chain: Small ribosomal subunit protein uS5 (206 aa).

Residues 1-15 (MTDTPTKQEIQSKND) are compositionally biased toward polar residues. The tract at residues 1-50 (MTDTPTKQEIQSKNDNVPAATPVEQKKNNRNDRKRNRRGDSKNLERDSDW) is disordered. A compositionally biased stretch (basic and acidic residues) spans 38–50 (RGDSKNLERDSDW). One can recognise an S5 DRBM domain in the interval 50-113 (WQERVVQIRR…SDGKKNLVRV (64 aa)).

This sequence belongs to the universal ribosomal protein uS5 family. In terms of assembly, part of the 30S ribosomal subunit. Contacts proteins S4 and S8.

Its function is as follows. With S4 and S12 plays an important role in translational accuracy. In terms of biological role, located at the back of the 30S subunit body where it stabilizes the conformation of the head with respect to the body. This is Small ribosomal subunit protein uS5 from Prochlorococcus marinus (strain AS9601).